We begin with the raw amino-acid sequence, 445 residues long: Phosphoglucosamine mutase (445 aa).

Serine 102 serves as the catalytic Phosphoserine intermediate. Mg(2+) is bound by residues serine 102, aspartate 241, aspartate 243, and aspartate 245. Serine 102 bears the Phosphoserine mark.

The protein belongs to the phosphohexose mutase family. The cofactor is Mg(2+). In terms of processing, activated by phosphorylation.

The enzyme catalyses alpha-D-glucosamine 1-phosphate = D-glucosamine 6-phosphate. In terms of biological role, catalyzes the conversion of glucosamine-6-phosphate to glucosamine-1-phosphate. This Pectobacterium carotovorum subsp. carotovorum (strain PC1) protein is Phosphoglucosamine mutase.